Here is a 241-residue protein sequence, read N- to C-terminus: Pyrroloquinoline-quinone synthase (241 aa).

This sequence belongs to the PqqC family.

It catalyses the reaction 6-(2-amino-2-carboxyethyl)-7,8-dioxo-1,2,3,4,7,8-hexahydroquinoline-2,4-dicarboxylate + 3 O2 = pyrroloquinoline quinone + 2 H2O2 + 2 H2O + H(+). It participates in cofactor biosynthesis; pyrroloquinoline quinone biosynthesis. Its function is as follows. Ring cyclization and eight-electron oxidation of 3a-(2-amino-2-carboxyethyl)-4,5-dioxo-4,5,6,7,8,9-hexahydroquinoline-7,9-dicarboxylic-acid to PQQ. The chain is Pyrroloquinoline-quinone synthase from Ruegeria pomeroyi (strain ATCC 700808 / DSM 15171 / DSS-3) (Silicibacter pomeroyi).